Consider the following 165-residue polypeptide: Ribosome maturation factor RimM (165 aa).

One can recognise a PRC barrel domain in the interval 90 to 161 (EDEYFIVDLV…LITIRPSGEW (72 aa)).

Belongs to the RimM family. Binds ribosomal protein uS19.

It is found in the cytoplasm. In terms of biological role, an accessory protein needed during the final step in the assembly of 30S ribosomal subunit, possibly for assembly of the head region. Essential for efficient processing of 16S rRNA. May be needed both before and after RbfA during the maturation of 16S rRNA. It has affinity for free ribosomal 30S subunits but not for 70S ribosomes. This is Ribosome maturation factor RimM from Clostridium perfringens (strain ATCC 13124 / DSM 756 / JCM 1290 / NCIMB 6125 / NCTC 8237 / Type A).